The sequence spans 439 residues: MKKGKADPCNYLFRRARVIDPARDLDAVADVLVVDGILTDIKPNIDLPSDRLAHFAVIDASEKWIVPGLIDMHVHLREPGEEYKETIATGTMAAVAGGYTAVACMPNTKPVNDCAAVTEYILERAREQGHCRVLPVGAVSSGLEGRSLAEFGELKGSGAVAVTDDGRPVANSMLMRRALEYAKNFDLPVISHAEDPALSEGGLMNEGPTSTLLGLHGIPKAAEEVMVARDLALAELTGARLHIAHVSTAGAVRMIGEAKSRGVPVTAETAPHYFTLTDDRLMTFDTLYKVNPPIRGPADVEAIKRGLADGTIDAVATDHAPHSSIEKDTEFEYAANGIIGLESALPLILELVREKTLTPSQAVAKVSCNPARILGLPLGTLLLNQRACMTYLDPEFYFVLDCTTFRSKSRNCPFHGQPTRGRALMTFFNGKVAFSRLSK.

Positions 73 and 75 each coordinate Zn(2+). Substrate is bound by residues 75–77 and asparagine 107; that span reads HLR. Residues aspartate 165, histidine 192, and histidine 245 each coordinate Zn(2+). Asparagine 291 provides a ligand contact to substrate. Aspartate 318 serves as a coordination point for Zn(2+). Residue aspartate 318 is part of the active site. Histidine 322 contacts substrate.

It belongs to the metallo-dependent hydrolases superfamily. DHOase family. Class I DHOase subfamily. Zn(2+) serves as cofactor.

It catalyses the reaction (S)-dihydroorotate + H2O = N-carbamoyl-L-aspartate + H(+). The protein operates within pyrimidine metabolism; UMP biosynthesis via de novo pathway; (S)-dihydroorotate from bicarbonate: step 3/3. Catalyzes the reversible cyclization of carbamoyl aspartate to dihydroorotate. The chain is Dihydroorotase from Syntrophobacter fumaroxidans (strain DSM 10017 / MPOB).